We begin with the raw amino-acid sequence, 550 residues long: Glucose-6-phosphate isomerase (550 aa).

The Proton donor role is filled by Glu-356. Catalysis depends on residues His-387 and Lys-515.

This sequence belongs to the GPI family.

Its subcellular location is the cytoplasm. It carries out the reaction alpha-D-glucose 6-phosphate = beta-D-fructose 6-phosphate. It participates in carbohydrate biosynthesis; gluconeogenesis. It functions in the pathway carbohydrate degradation; glycolysis; D-glyceraldehyde 3-phosphate and glycerone phosphate from D-glucose: step 2/4. Its function is as follows. Catalyzes the reversible isomerization of glucose-6-phosphate to fructose-6-phosphate. This is Glucose-6-phosphate isomerase from Vibrio vulnificus (strain YJ016).